A 117-amino-acid polypeptide reads, in one-letter code: Immunoglobulin heavy variable 1-69D (117 aa).

The first 19 residues, methionine 1–serine 19, serve as a signal peptide directing secretion. Glutamine 20 carries the pyrrolidone carboxylic acid modification. Residues glutamine 20 to serine 44 form a framework-1 region. One can recognise an Ig-like domain in the interval glutamine 20–arginine 117. A disulfide bridge links cysteine 41 with cysteine 115. Positions glycine 45–alanine 52 are complementarity-determining-1. The tract at residues isoleucine 53 to glycine 69 is framework-2. The complementarity-determining-2 stretch occupies residues isoleucine 70–alanine 77. The interval asparagine 78 to cysteine 115 is framework-3. Residues alanine 116 to arginine 117 are complementarity-determining-3.

Immunoglobulins are composed of two identical heavy chains and two identical light chains; disulfide-linked.

Its subcellular location is the secreted. The protein localises to the cell membrane. In terms of biological role, v region of the variable domain of immunoglobulin heavy chains that participates in the antigen recognition. Immunoglobulins, also known as antibodies, are membrane-bound or secreted glycoproteins produced by B lymphocytes. In the recognition phase of humoral immunity, the membrane-bound immunoglobulins serve as receptors which, upon binding of a specific antigen, trigger the clonal expansion and differentiation of B lymphocytes into immunoglobulins-secreting plasma cells. Secreted immunoglobulins mediate the effector phase of humoral immunity, which results in the elimination of bound antigens. The antigen binding site is formed by the variable domain of one heavy chain, together with that of its associated light chain. Thus, each immunoglobulin has two antigen binding sites with remarkable affinity for a particular antigen. The variable domains are assembled by a process called V-(D)-J rearrangement and can then be subjected to somatic hypermutations which, after exposure to antigen and selection, allow affinity maturation for a particular antigen. The sequence is that of Immunoglobulin heavy variable 1-69D from Homo sapiens (Human).